A 110-amino-acid chain; its full sequence is Evasin P1166 (110 aa).

Positions 1-24 (MEVKIFTLLQIALFIALGIHLVVA) are cleaved as a signal peptide. 3 cysteine pairs are disulfide-bonded: C45–C67, C49–C69, and C60–C80. N-linked (GlcNAc...) asparagine glycosylation is present at N48. The segment at 89–110 (SEYPNPKSSEIDAAAPLPRETH) is disordered.

The protein resides in the secreted. Salivary chemokine-binding protein which binds to host chemokines CXCL1, CXCL2 and CXCL8. The chain is Evasin P1166 from Ixodes ricinus (Common tick).